Consider the following 415-residue polypeptide: Gamma-glutamyl phosphate reductase 1 (415 aa).

It belongs to the gamma-glutamyl phosphate reductase family.

It localises to the cytoplasm. The catalysed reaction is L-glutamate 5-semialdehyde + phosphate + NADP(+) = L-glutamyl 5-phosphate + NADPH + H(+). It functions in the pathway amino-acid biosynthesis; L-proline biosynthesis; L-glutamate 5-semialdehyde from L-glutamate: step 2/2. Catalyzes the NADPH-dependent reduction of L-glutamate 5-phosphate into L-glutamate 5-semialdehyde and phosphate. The product spontaneously undergoes cyclization to form 1-pyrroline-5-carboxylate. The chain is Gamma-glutamyl phosphate reductase 1 from Bacillus licheniformis (strain ATCC 14580 / DSM 13 / JCM 2505 / CCUG 7422 / NBRC 12200 / NCIMB 9375 / NCTC 10341 / NRRL NRS-1264 / Gibson 46).